We begin with the raw amino-acid sequence, 380 residues long: Calreticulin-3 (380 aa).

Residues 1 to 19 (MVSARALLWAICVLRVALA) form the signal peptide. The N-domain stretch occupies residues 20-197 (TVYFQEEFLD…GQSIESGSIE (178 aa)). N-linked (GlcNAc...) asparagine glycosylation is present at Asn-42. Residues Tyr-109, Lys-111, Tyr-128, and Asp-135 each contribute to the an alpha-D-glucoside site. A disulfide bridge links Cys-137 with Cys-163. 7 consecutive repeat copies span residues 191–202 (IESGSIEYDWNL), 209–220 (EKTSLDSRDWDQ), 222–231 (EGSKVQDWEK), 235–246 (DAGASKPSDWNS), 250–256 (GDWLQKP), 260–268 (DGLKAEGID), and 270–280 (DVWLHQKMRPA). The tract at residues 191–246 (IESGSIEYDWNLTSLRKTEKTSLDSRDWDQVEGSKVQDWEKHFLDAGASKPSDWNS) is 4 X approximate repeats. A P-domain region spans residues 198–291 (YDWNLTSLRK…YLTQYDLSEF (94 aa)). N-linked (GlcNAc...) asparagine glycosylation is present at Asn-201. The interval 250 to 280 (GDWLQKPPYEDGLKAEGIDKDVWLHQKMRPA) is 3 X approximate repeats. Residues 292–380 (ENIGAIGLEL…FSRFHRQGEL (89 aa)) are C-domain. Glu-300 is a binding site for an alpha-D-glucoside. The Prevents secretion from ER motif lies at 377 to 380 (QGEL).

The protein belongs to the calreticulin family. As to quaternary structure, component of an EIF2 complex at least composed of CELF1/CUGBP1, CALR, CALR3, EIF2S1, EIF2S2, HSP90B1 and HSPA5. Testis specific, absent in mature sperm.

It localises to the endoplasmic reticulum lumen. Its function is as follows. CALR3 capacity for calcium-binding may be absent or much lower than that of CALR. During spermatogenesis, may act as a lectin-independent chaperone for specific client proteins such as ADAM3. Required for sperm fertility. The sequence is that of Calreticulin-3 (Calr3) from Mus musculus (Mouse).